Here is a 190-residue protein sequence, read N- to C-terminus: MNPASIIFLAFAMSTDAFAAAVGKGSAMLKPRLLEALRIGLIFGVIEAITPVVGWFIGQAATQWVANWDHWIAFSLLLLLGLHMIYNGTRQQAEAEEEKPRQHGFWLLAVTGLATSIDALAVGVGLAFVNVNIWVAASAIGLATMTMVTLGVMLGRAIGTVMGQRAEVLGGVVLIIVGSRILYEHLSAVA.

6 helical membrane passes run 3 to 23, 39 to 59, 65 to 85, 106 to 128, 133 to 155, and 157 to 177; these read PASI…AAVG, IGLI…FIGQ, VANW…LHMI, WLLA…GLAF, IWVA…VMLG, and AIGT…LIIV.

It belongs to the MntP (TC 9.B.29) family.

It localises to the cell inner membrane. Functionally, probably functions as a manganese efflux pump. The chain is Putative manganese efflux pump MntP from Pseudomonas fluorescens (strain ATCC BAA-477 / NRRL B-23932 / Pf-5).